A 407-amino-acid chain; its full sequence is Ran GTPase-activating protein 1 (407 aa).

11 LRR repeats span residues 11–39 (EEEQVYSISGKALKLTTSDDIKPYLEELA), 40–67 (ALKTCTKLDLSGNTIGTEASEALAKCIA), 68–101 (ENTQVRESLVEVNFADLYTSRLVDEVVDSLKFLL), 102–133 (PVLLKCPHLEIVNLSDNAFGLRTIELLEDYIA), 134–166 (HAVNIKHLILSNNGMGPFAGERIGKALFHLAQN), 167–197 (KKAASKPFLETFICGRNRLENGSAVYLALGL), 198–226 (KSHSEGLKVVKLYQNGIRPKGVATLIHYG), 227–256 (LQYLKNLEILDLQDNTFTKHASLILAKALP), 257–285 (TWKDSLFELNLNDCLLKTAGSDEVFKVFT), 286–315 (EVKFPNLHVLKFEYNEMAQETIEVSFLPAM), and 316–346 (EKGNLPELEKLEINGNRLDEDSDALDLLQSK). The interval 353–378 (DDFEEVDSEDEEGEDEEDEDEDEKLE) is disordered. Serine 360 is subject to Phosphoserine.

It belongs to the RNA1 family.

It localises to the cytoplasm. Its function is as follows. GTPase activator for the nuclear Ras-related regulatory protein GSP1 (Ran), converting it to the putatively inactive GDP-bound state. The protein is Ran GTPase-activating protein 1 (RNA1) of Saccharomyces cerevisiae (strain ATCC 204508 / S288c) (Baker's yeast).